Here is a 142-residue protein sequence, read N- to C-terminus: Large ribosomal subunit protein uL13 (142 aa).

The protein belongs to the universal ribosomal protein uL13 family. Part of the 50S ribosomal subunit.

In terms of biological role, this protein is one of the early assembly proteins of the 50S ribosomal subunit, although it is not seen to bind rRNA by itself. It is important during the early stages of 50S assembly. This Wigglesworthia glossinidia brevipalpis protein is Large ribosomal subunit protein uL13.